Here is a 297-residue protein sequence, read N- to C-terminus: Undecaprenyl-diphosphatase (297 aa).

The next 7 helical transmembrane spans lie at 39-59 (PGAA…LIYF), 85-105 (ARLA…GLTL), 113-133 (FRSL…LLVV), 151-171 (GILI…RSGT), 190-210 (SFLL…KHLL), 220-240 (ALWV…AWLL), and 249-269 (LVFV…LQTG).

It belongs to the UppP family.

It is found in the cell inner membrane. It catalyses the reaction di-trans,octa-cis-undecaprenyl diphosphate + H2O = di-trans,octa-cis-undecaprenyl phosphate + phosphate + H(+). Its function is as follows. Catalyzes the dephosphorylation of undecaprenyl diphosphate (UPP). Confers resistance to bacitracin. The protein is Undecaprenyl-diphosphatase of Myxococcus xanthus (strain DK1622).